Consider the following 431-residue polypeptide: Glutamate-1-semialdehyde 2,1-aminomutase (431 aa).

Lysine 269 bears the N6-(pyridoxal phosphate)lysine mark.

It belongs to the class-III pyridoxal-phosphate-dependent aminotransferase family. HemL subfamily. In terms of assembly, homodimer. Pyridoxal 5'-phosphate is required as a cofactor.

Its subcellular location is the cytoplasm. It carries out the reaction (S)-4-amino-5-oxopentanoate = 5-aminolevulinate. The protein operates within porphyrin-containing compound metabolism; protoporphyrin-IX biosynthesis; 5-aminolevulinate from L-glutamyl-tRNA(Glu): step 2/2. Its pathway is porphyrin-containing compound metabolism; chlorophyll biosynthesis. The protein is Glutamate-1-semialdehyde 2,1-aminomutase of Chlorobium phaeobacteroides (strain BS1).